Reading from the N-terminus, the 147-residue chain is Large ribosomal subunit protein uL13 (147 aa).

The protein belongs to the universal ribosomal protein uL13 family. As to quaternary structure, part of the 50S ribosomal subunit.

Functionally, this protein is one of the early assembly proteins of the 50S ribosomal subunit, although it is not seen to bind rRNA by itself. It is important during the early stages of 50S assembly. This Paenarthrobacter aurescens (strain TC1) protein is Large ribosomal subunit protein uL13.